The primary structure comprises 347 residues: F-box/kelch-repeat protein At5g03020 (347 aa).

The segment at 1–21 (MTEEMSKESPPPPPTSFSSLP) is disordered. The region spanning 14–62 (PTSFSSLPDDVALDCRARISRFHYPTLSLVSKGFRTLIASPELEATRSF) is the F-box domain. Kelch repeat units lie at residues 119 to 165 (QIYI…VIDG) and 167 to 215 (IYVI…KKKH).

This Arabidopsis thaliana (Mouse-ear cress) protein is F-box/kelch-repeat protein At5g03020.